The sequence spans 271 residues: MVLIKEFRVVLPCSVQEYQVGQLYSVAEASKNETGGGEGIEVLKNEPYENDGEKGQYTHKIYHLKSKVPAFVRMIAPEGSLVFHEKAWNAYPYCRTIVTNEYMKDDFFIKIETWHKPDLGTLENVHGLDPNTWKTVEIVHIDIADRSQVEPADYKADEDPALFQSVKTKRGPLGPNWKKELANTPDCPKMCAYKLVTIKFKWWGLQSKVENFIQKQEKRIFTNLHRQLFCWIDKWIDLTMEDIRRMEDETQKELETMRKKGSVRGTSAADA.

Lys215 is subject to N6-acetyllysine. A Phosphoserine modification is found at Ser262.

The protein belongs to the PtdIns transfer protein family. PI transfer class I subfamily. Post-translationally, constitutive phosphorylation of Ser-262 has no effect on phospholipid transfer activity but is required for Golgi targeting. As to expression, expressed abundantly in brain, kidney, liver, and lung, but in a lesser amount in testis.

It localises to the golgi apparatus. The protein localises to the golgi apparatus membrane. Its subcellular location is the endoplasmic reticulum membrane. The enzyme catalyses a 1,2-diacyl-sn-glycero-3-phosphocholine(in) = a 1,2-diacyl-sn-glycero-3-phosphocholine(out). It catalyses the reaction a 1,2-diacyl-sn-glycero-3-phospho-(1D-myo-inositol)(in) = a 1,2-diacyl-sn-glycero-3-phospho-(1D-myo-inositol)(out). The catalysed reaction is an N-(acyl)-sphingosylphosphocholine(in) = an N-(acyl)-sphingosylphosphocholine(out). With respect to regulation, phosphatidylinositol transfer activity is inhibited by N-ethylmaleimide. In terms of biological role, catalyzes the transfer of phosphatidylinositol between membranes. Also catalyzes the transfer of phosphatidylcholine and sphingomyelin between membranes. Required for COPI-mediated retrograde transport from the Golgi to the endoplasmic reticulum; phosphatidylinositol and phosphatidylcholine transfer activity is essential for this function. This is Phosphatidylinositol transfer protein beta isoform (Pitpnb) from Rattus norvegicus (Rat).